A 183-amino-acid polypeptide reads, in one-letter code: Large ribosomal subunit protein uL6 (183 aa).

The protein belongs to the universal ribosomal protein uL6 family. As to quaternary structure, part of the 50S ribosomal subunit.

In terms of biological role, this protein binds to the 23S rRNA, and is important in its secondary structure. It is located near the subunit interface in the base of the L7/L12 stalk, and near the tRNA binding site of the peptidyltransferase center. The sequence is that of Large ribosomal subunit protein uL6 from Ruminiclostridium cellulolyticum (strain ATCC 35319 / DSM 5812 / JCM 6584 / H10) (Clostridium cellulolyticum).